An 852-amino-acid polypeptide reads, in one-letter code: Eukaryotic translation initiation factor 3 subunit C (852 aa).

The tract at residues 1-90 (MSRFFVSGYP…DSDSDDEGRK (90 aa)) is disordered. Residues 14-57 (SSEEEDLLSSSEEELLSSESEEDNFSSDSEFGNDSDNDSSDSDS) are compositionally biased toward acidic residues. The 176-residue stretch at 597–772 (FHMHINLELL…SFVNFTTNDH (176 aa)) folds into the PCI domain. Positions 798–809 (TASNGYSRKQPM) are enriched in polar residues. Residues 798–852 (TASNGYSRKQPMQQQQQQQQQQQQQKEQKELLHEENNRFRYANVNANNDEFQTTA) are disordered. The segment covering 810–822 (QQQQQQQQQQQQQ) has biased composition (low complexity). Residues 823-835 (KEQKELLHEENNR) are compositionally biased toward basic and acidic residues. The span at 841-852 (VNANNDEFQTTA) shows a compositional bias: polar residues.

Belongs to the eIF-3 subunit C family. As to quaternary structure, component of the eukaryotic translation initiation factor 3 (eIF-3) complex.

The protein resides in the cytoplasm. Its function is as follows. Component of the eukaryotic translation initiation factor 3 (eIF-3) complex, which is involved in protein synthesis of a specialized repertoire of mRNAs and, together with other initiation factors, stimulates binding of mRNA and methionyl-tRNAi to the 40S ribosome. The eIF-3 complex specifically targets and initiates translation of a subset of mRNAs involved in cell proliferation. This chain is Eukaryotic translation initiation factor 3 subunit C, found in Debaryomyces hansenii (strain ATCC 36239 / CBS 767 / BCRC 21394 / JCM 1990 / NBRC 0083 / IGC 2968) (Yeast).